A 62-amino-acid chain; its full sequence is UPF0337 protein gsr0040 (62 aa).

2 stretches are compositionally biased toward basic and acidic residues: residues 1–15 (MGIDKRAEATAKDVQ) and 27–62 (DDPKLELEGKAKQVEASAEHKKEDLKDQAHRTIDNV). The segment at 1–62 (MGIDKRAEAT…DQAHRTIDNV (62 aa)) is disordered.

This sequence belongs to the UPF0337 (CsbD) family.

This Gloeobacter violaceus (strain ATCC 29082 / PCC 7421) protein is UPF0337 protein gsr0040.